The following is a 1047-amino-acid chain: UPF0182 protein Mlut_14990 (1047 aa).

Composition is skewed to gly residues over residues 1-27 (MSFGQGGGGPFGGPPRDGGGTAGGQSG) and 49-59 (GPGGPFGGGGS). The disordered stretch occupies residues 1–66 (MSFGQGGGGP…GGSSAARGRG (66 aa)). 7 consecutive transmembrane segments (helical) span residues 71–91 (PSALVLTIIAVAVLVGLFVVF), 114–134 (VLAKGALFLIAGLGMALAVWL), 168–188 (LVFLGVPLVLGVFAGSTAMNG), 214–234 (FFMATLPFLTLVVGYLISVVL), 266–286 (AHIGITLAVFLLLQGVNFWLN), 314–334 (AILAVTAVIVAGLFVWTVVSG), and 341–361 (IGTAVLVITALVVGTAYPFIV). Disordered regions lie at residues 544 to 568 (GAPAVERDRPQTADSQEDTAYTFSG), 941 to 965 (GDSGAVTPEEKQAEAPAPGEKPTAP), and 1007 to 1047 (EALK…TPSG). A compositionally biased stretch (polar residues) spans 555–565 (TADSQEDTAYT). Residues 1015–1037 (ADDALGGDAPAQEQAPAEASPAP) are compositionally biased toward low complexity. A compositionally biased stretch (pro residues) spans 1038-1047 (SSSPSPTPSG).

This sequence belongs to the UPF0182 family.

Its subcellular location is the cell membrane. The polypeptide is UPF0182 protein Mlut_14990 (Micrococcus luteus (strain ATCC 4698 / DSM 20030 / JCM 1464 / CCM 169 / CCUG 5858 / IAM 1056 / NBRC 3333 / NCIMB 9278 / NCTC 2665 / VKM Ac-2230) (Micrococcus lysodeikticus)).